The chain runs to 1368 residues: DNA-directed RNA polymerase subunit beta (1368 aa).

It belongs to the RNA polymerase beta chain family. In terms of assembly, the RNAP catalytic core consists of 2 alpha, 1 beta, 1 beta' and 1 omega subunit. When a sigma factor is associated with the core the holoenzyme is formed, which can initiate transcription.

It carries out the reaction RNA(n) + a ribonucleoside 5'-triphosphate = RNA(n+1) + diphosphate. Functionally, DNA-dependent RNA polymerase catalyzes the transcription of DNA into RNA using the four ribonucleoside triphosphates as substrates. In Paraburkholderia phymatum (strain DSM 17167 / CIP 108236 / LMG 21445 / STM815) (Burkholderia phymatum), this protein is DNA-directed RNA polymerase subunit beta.